The following is a 463-amino-acid chain: Serine/threonine-protein kinase tricornered (463 aa).

One can recognise a Protein kinase domain in the interval Phe-93–Phe-394. ATP is bound by residues Ile-99 to Val-107 and Lys-122. The interaction with mats and Mob1 stretch occupies residues Tyr-119–Thr-180. The Proton acceptor role is filled by Asp-216. Ser-292 carries the post-translational modification Phosphoserine. One can recognise an AGC-kinase C-terminal domain in the interval Arg-395–Glu-463. Thr-453 is subject to Phosphothreonine.

The protein belongs to the protein kinase superfamily. AGC Ser/Thr protein kinase family. Interacts with, and is activated by, Mob1. Mg(2+) is required as a cofactor. As to expression, expressed in the peripheral and central nervous system (at protein level). Expressed in the wing imaginal disk.

The protein localises to the cytoplasm. The protein resides in the nucleus. It carries out the reaction L-seryl-[protein] + ATP = O-phospho-L-seryl-[protein] + ADP + H(+). The catalysed reaction is L-threonyl-[protein] + ATP = O-phospho-L-threonyl-[protein] + ADP + H(+). Activated by fry. Its function is as follows. Serine/threonine-protein kinase involved in controlling cell structure and proliferation of a variety of polarized outgrowths including epidermal hairs, bristles, arista laterals, and dendrites. Together with fry, maintains the integrity of epidermal hairs and is an essential component of the signaling pathway regulating dendritic branching of sensory neurons. Reduces neurite outgrowth by phosphorylating pav, thereby inhibiting its function in microtubule-microtubule sliding. The sequence is that of Serine/threonine-protein kinase tricornered from Drosophila melanogaster (Fruit fly).